Consider the following 44-residue polypeptide: Large ribosomal subunit protein bL34 (44 aa).

Belongs to the bacterial ribosomal protein bL34 family.

In Neorickettsia sennetsu (strain ATCC VR-367 / Miyayama) (Ehrlichia sennetsu), this protein is Large ribosomal subunit protein bL34.